The sequence spans 356 residues: Glycerol-3-phosphate dehydrogenase [NAD(P)+] (356 aa).

NADPH contacts are provided by Trp-12, Arg-32, Arg-33, and Lys-117. Sn-glycerol 3-phosphate is bound by residues Lys-117, Gly-151, and Ser-153. Ala-155 contributes to the NADPH binding site. Residues Lys-206, Asp-265, Arg-276, and Asn-277 each coordinate sn-glycerol 3-phosphate. Residue Lys-206 is the Proton acceptor of the active site. Arg-276 is an NADPH binding site. Residues Leu-309 and Glu-311 each contribute to the NADPH site.

This sequence belongs to the NAD-dependent glycerol-3-phosphate dehydrogenase family.

The protein resides in the cytoplasm. The enzyme catalyses sn-glycerol 3-phosphate + NAD(+) = dihydroxyacetone phosphate + NADH + H(+). It catalyses the reaction sn-glycerol 3-phosphate + NADP(+) = dihydroxyacetone phosphate + NADPH + H(+). Its pathway is membrane lipid metabolism; glycerophospholipid metabolism. In terms of biological role, catalyzes the reduction of the glycolytic intermediate dihydroxyacetone phosphate (DHAP) to sn-glycerol 3-phosphate (G3P), the key precursor for phospholipid synthesis. In Treponema pallidum (strain Nichols), this protein is Glycerol-3-phosphate dehydrogenase [NAD(P)+].